Consider the following 1342-residue polypeptide: DNA-directed RNA polymerase subunit beta (1342 aa).

The protein belongs to the RNA polymerase beta chain family. As to quaternary structure, the RNAP catalytic core consists of 2 alpha, 1 beta, 1 beta' and 1 omega subunit. When a sigma factor is associated with the core the holoenzyme is formed, which can initiate transcription.

It carries out the reaction RNA(n) + a ribonucleoside 5'-triphosphate = RNA(n+1) + diphosphate. DNA-dependent RNA polymerase catalyzes the transcription of DNA into RNA using the four ribonucleoside triphosphates as substrates. This Histophilus somni (strain 2336) (Haemophilus somnus) protein is DNA-directed RNA polymerase subunit beta.